The following is a 314-amino-acid chain: Short-chain dehydrogenase/reductase drtF (314 aa).

NADP(+)-binding residues include valine 26, lysine 50, aspartate 73, asparagine 100, tyrosine 185, and lysine 189. Tyrosine 185 (proton acceptor) is an active-site residue. The Lowers pKa of active site Tyr role is filled by lysine 189.

It belongs to the short-chain dehydrogenases/reductases (SDR) family.

Its pathway is secondary metabolite biosynthesis; terpenoid biosynthesis. In terms of biological role, short-chain dehydrogenase/reductase; part of the gene cluster that mediates the biosynthesis of various drimane-type sesquiterpene esters, compounds that exhibit diverse biological activities and are widely present in eukaryotes. The pathway begins with the synthesis of the backbone drimenol by the terpene cyclase drtB using farnesyl pyrophosphate (FPP) as substrate. The cytochrome P450 monooxygenase drtD is then responsible for the hydroxylations at C-6, C-9 and C-12, as well as the oxidation of hydroxyl groups at C-6 and C-11 to a ketone and an aldehyde, respectively. Then, the biosynthesis can go in two directions, either the hydroxylated drimenol is further hydroxylated at C-2 and C-3 by an enzyme(s) not associated with the drt cluster, or the FAD-binding oxidoreductase drtC further oxidizes C-11 or C-12 to form the butyrolactone ring. DrtB, drtD and drtC are solely responsible for the formation of the different drimane structures observed during drimane sesquiterpenes biosynthesis. The polyketide synthase drtA synthesizes different lengths (C6 and C8) of PKS chains, which are then oxidized to varying degrees by the short-chain dehydrogenase drtF. Finally, these PKS chains are transferred onto drimane sesquiterpenes by the acyltransferase drtE, forming the sesquiterpene esters. In addition to the different fatty acyl-CoA chains produced by drtA, drtE is also able to use cinnamoyl-CoA as a substrate. The polypeptide is Short-chain dehydrogenase/reductase drtF (Aspergillus calidoustus).